A 198-amino-acid polypeptide reads, in one-letter code: MDVHDVKLTISAVAAAQYPEDGHPEIAFLGRSNVGKSSLINKLIQRKAMARTSGVPGKTQTLNFYDLDSRLFFVDVPGYGYAKVSKTARAKFAAMIETYLTTRQPLRGVVLLVDSRHEPTADDISMYQYLKYYQLRTLVVATKIDKTPKSKRLHVAKQIKQRLDLNQTDDVILFSATTGEGYEAVWSWLEQTAGLEGR.

The EngB-type G domain maps to Gly22–Leu195. GTP is bound by residues Gly30–Ser37, Gly57–Thr61, Asp75–Gly78, Thr142–Asp145, and Phe174–Ala176. Residues Ser37 and Thr59 each coordinate Mg(2+).

Belongs to the TRAFAC class TrmE-Era-EngA-EngB-Septin-like GTPase superfamily. EngB GTPase family. Mg(2+) serves as cofactor.

In terms of biological role, necessary for normal cell division and for the maintenance of normal septation. The polypeptide is Probable GTP-binding protein EngB (Lacticaseibacillus paracasei (strain ATCC 334 / BCRC 17002 / CCUG 31169 / CIP 107868 / KCTC 3260 / NRRL B-441) (Lactobacillus paracasei)).